The primary structure comprises 203 residues: MKSGNGPLRVGIGGPVGSGKTALTEKLCKAMSGDYSVAVVTNDIYTKEDAEALVRMQALPSERIVGVETGGCPHTAIREDATINLQAIAGLNAQFPDLDVVFIESGGDNLAATFSPDLADITIYVISVCQGEEIPRKGGPGITRSDLLVINKKDLAPYVGADLTVMDSDATRMRNAMPFVFTDMKRGDGVDRIVGFLKEQGGL.

14–21 lines the GTP pocket; sequence GPVGSGKT.

Belongs to the SIMIBI class G3E GTPase family. UreG subfamily. Homodimer. UreD, UreF and UreG form a complex that acts as a GTP-hydrolysis-dependent molecular chaperone, activating the urease apoprotein by helping to assemble the nickel containing metallocenter of UreC. The UreE protein probably delivers the nickel.

The protein localises to the cytoplasm. In terms of biological role, facilitates the functional incorporation of the urease nickel metallocenter. This process requires GTP hydrolysis, probably effectuated by UreG. This Agrobacterium fabrum (strain C58 / ATCC 33970) (Agrobacterium tumefaciens (strain C58)) protein is Urease accessory protein UreG.